The sequence spans 98 residues: UPF0390 protein zgc136864 (98 aa).

Residues 1–30 (MAQGKQKFKAQRPGGAKKHQNKPKGLKKGG) show a composition bias toward basic residues. 2 disordered regions span residues 1-38 (MAQG…PKKA) and 63-98 (TQKA…GPSK). A compositionally biased stretch (low complexity) spans 83–98 (KSGTAGAPKPAAGPSK).

Belongs to the UPF0390 family.

The protein is UPF0390 protein zgc136864 of Danio rerio (Zebrafish).